Reading from the N-terminus, the 257-residue chain is Folate receptor alpha (257 aa).

The first 24 residues, 1-24, serve as a signal peptide directing secretion; sequence MAQRMTTQLLLLLVWVAVVGEAQT. Intrachain disulfides connect cysteine 37–cysteine 65, cysteine 57–cysteine 105, cysteine 66–cysteine 109, cysteine 89–cysteine 175, cysteine 96–cysteine 146, cysteine 135–cysteine 209, cysteine 139–cysteine 189, and cysteine 152–cysteine 169. N-linked (GlcNAc...) asparagine glycosylation is present at asparagine 69. Folate is bound by residues aspartate 103, tyrosine 107, 124–128, 157–162, and serine 196; these read WRKER and HKGWNW. N-linked (GlcNAc...) asparagine glycosylation is present at asparagine 161. N-linked (GlcNAc...) asparagine glycosylation occurs at asparagine 201. Serine 234 carries the GPI-anchor amidated serine lipid modification. A propeptide spans 235 to 257 (removed in mature form); it reads GAGPWAAWPFLLSLALMLLWLLS.

It belongs to the folate receptor family. The secreted form is derived from the membrane-bound form either by cleavage of the GPI anchor, or/and by proteolysis catalyzed by a metalloprotease. As to expression, primarily expressed in tissues of epithelial origin. Expression is increased in malignant tissues. Expressed in kidney, lung and cerebellum. Detected in placenta and thymus epithelium.

Its subcellular location is the cell membrane. It is found in the apical cell membrane. The protein resides in the basolateral cell membrane. The protein localises to the secreted. It localises to the cytoplasmic vesicle. Its subcellular location is the clathrin-coated vesicle. It is found in the endosome. Functionally, binds to folate and reduced folic acid derivatives and mediates delivery of 5-methyltetrahydrofolate and folate analogs into the interior of cells. Has high affinity for folate and folic acid analogs at neutral pH. Exposure to slightly acidic pH after receptor endocytosis triggers a conformation change that strongly reduces its affinity for folates and mediates their release. Required for normal embryonic development and normal cell proliferation. The protein is Folate receptor alpha (FOLR1) of Homo sapiens (Human).